Here is a 954-residue protein sequence, read N- to C-terminus: Kinesin-like protein KIN-14Q (954 aa).

In terms of domain architecture, Calponin-homology (CH) spans 33–155 (AMRRYDAASW…CVLALKSFSE (123 aa)). A Kinesin motor domain is found at 374–699 (NIRVYCRVRP…LKFAERVASV (326 aa)). Residue 457-464 (GQTGSGKT) participates in ATP binding. The stretch at 704–733 (AKANKEGSEVRELKEQIATLKAALAKKEGE) forms a coiled coil. Positions 844–855 (YDPDKQRRRAEP) are enriched in basic and acidic residues. 2 disordered regions span residues 844–876 (YDPDKQRRRAEPVETDDSDSFDAATSSPSDQEM) and 912–954 (PNLA…NTPK). Residues 864-873 (FDAATSSPSD) show a composition bias toward low complexity. The segment covering 928–954 (PIRNSKQLPFSTTGGRRTRNGKINTPK) has biased composition (polar residues).

The protein belongs to the TRAFAC class myosin-kinesin ATPase superfamily. Kinesin family. KIN-14 subfamily. In terms of assembly, forms oligomers in vitro. Interacts with actin microfilaments. Binds to actin in vitro through its calponin-homology (CH) domain. Expressed in primary leaf, primary root, developing flower and coleoptile.

The protein resides in the cytoplasm. Its subcellular location is the cytoskeleton. With respect to regulation, the microtubule-dependent ATPase activity is regulated by actin binding. Functionally, minus end-directed motor protein that transports actin filaments along microtubules. Plays a central role in the polar orientation of actin filaments along microtubules, and thus a contribution to the organization of the cytoskeletal architecture. Links the actin microfilaments with the cortical microtubules in both cycling and non-cycling cells. Required for efficient cell elongation by its participation in the premitotic nuclear positioning. The protein is Kinesin-like protein KIN-14Q of Oryza sativa subsp. japonica (Rice).